Here is a 343-residue protein sequence, read N- to C-terminus: Heat-inducible transcription repressor HrcA (343 aa).

It belongs to the HrcA family.

Negative regulator of class I heat shock genes (grpE-dnaK-dnaJ and groELS operons). Prevents heat-shock induction of these operons. In Mycobacterium avium (strain 104), this protein is Heat-inducible transcription repressor HrcA.